The primary structure comprises 139 residues: Ribonuclease VapC3 (139 aa).

Positions 14–121 (EAIVLDTGAF…VATDDYTLQR (108 aa)) constitute a PINc domain. Residue D19 participates in Mg(2+) binding.

This sequence belongs to the PINc/VapC protein family. It depends on Mg(2+) as a cofactor.

Its function is as follows. Toxic component of a type II toxin-antitoxin (TA) system. An RNase. In Aeropyrum pernix (strain ATCC 700893 / DSM 11879 / JCM 9820 / NBRC 100138 / K1), this protein is Ribonuclease VapC3.